The primary structure comprises 215 residues: Cytochrome c biogenesis ATP-binding export protein CcmA (215 aa).

The 203-residue stretch at 7–209 (LKIDRLACQR…ALTVLNLAQY (203 aa)) folds into the ABC transporter domain. 39–46 (GHNGIGKT) contacts ATP.

Belongs to the ABC transporter superfamily. CcmA exporter (TC 3.A.1.107) family. The complex is composed of two ATP-binding proteins (CcmA) and two transmembrane proteins (CcmB).

Its subcellular location is the cell inner membrane. It carries out the reaction heme b(in) + ATP + H2O = heme b(out) + ADP + phosphate + H(+). Functionally, part of the ABC transporter complex CcmAB involved in the biogenesis of c-type cytochromes; once thought to export heme, this seems not to be the case, but its exact role is uncertain. Responsible for energy coupling to the transport system. This is Cytochrome c biogenesis ATP-binding export protein CcmA from Mannheimia succiniciproducens (strain KCTC 0769BP / MBEL55E).